The primary structure comprises 64 residues: APECGREAHCGDDCQSQVVTRDFDDRTCPKLLCCSKDGWCGNTDANWRCGVDFGRTCPNDLCCS.

2 consecutive Chitin-binding type-1 domains span residues 1 to 20 (APEC…QVVT) and 22 to 45 (DFDD…NTDA).

Glycosylated.

N-acetyl-D-glucosamine binding lectin. Shows low hemagglutinating activity towards human erythrocytes. Has low mitogenic activity towards human peripheral blood lymphocytes. In Phytolacca americana (American pokeweed), this protein is Lectin-A.